Here is a 253-residue protein sequence, read N- to C-terminus: DNA repair protein RecO (253 aa).

It belongs to the RecO family.

Functionally, involved in DNA repair and RecF pathway recombination. This Nitrobacter hamburgensis (strain DSM 10229 / NCIMB 13809 / X14) protein is DNA repair protein RecO.